Here is a 342-residue protein sequence, read N- to C-terminus: Alternative oxidase, mitochondrial (342 aa).

Residues 1-20 constitute a mitochondrion transit peptide; that stretch reads MIKTYQYRSILNSRNVGIRF. Residues 135–155 traverse the membrane as a helical segment; it reads LTRCIFLESVAGVPGMVAAFI. The Fe cation site is built by glutamate 142, glutamate 181, and histidine 184. Residues 200–220 form a helical membrane-spanning segment; it reads FIIYMGQGVFANLFFLVYLIK. Residues glutamate 232, glutamate 287, and histidine 290 each contribute to the Fe cation site. 2 stretches are compositionally biased toward basic and acidic residues: residues 308-321 and 330-342; these read PFALKVEDVPKEQQ and PHPEGWNREQMRL. The disordered stretch occupies residues 308 to 342; sequence PFALKVEDVPKEQQPDEYSLKTPHPEGWNREQMRL.

This sequence belongs to the alternative oxidase family. Homodimer; disulfide-linked. Requires Fe cation as cofactor.

Its subcellular location is the mitochondrion inner membrane. Catalyzes cyanide-resistant oxygen consumption. May increase respiration when the cytochrome respiratory pathway is restricted, or in response to low temperatures. The chain is Alternative oxidase, mitochondrial (AOX1) from Wickerhamomyces anomalus (Yeast).